Here is a 69-residue protein sequence, read N- to C-terminus: DNA-directed RNA polymerase subunit omega (69 aa).

This sequence belongs to the RNA polymerase subunit omega family. As to quaternary structure, the RNAP catalytic core consists of 2 alpha, 1 beta, 1 beta' and 1 omega subunit. When a sigma factor is associated with the core the holoenzyme is formed, which can initiate transcription.

The catalysed reaction is RNA(n) + a ribonucleoside 5'-triphosphate = RNA(n+1) + diphosphate. Promotes RNA polymerase assembly. Latches the N- and C-terminal regions of the beta' subunit thereby facilitating its interaction with the beta and alpha subunits. The polypeptide is DNA-directed RNA polymerase subunit omega (Geotalea daltonii (strain DSM 22248 / JCM 15807 / FRC-32) (Geobacter daltonii)).